Here is a 319-residue protein sequence, read N- to C-terminus: Nuclear hormone receptor family member nhr-174 (319 aa).

The nuclear receptor DNA-binding region spans 7-81; that stretch reads DPVCPVCEFP…AGMKRNLVRQ (75 aa). NR C4-type zinc fingers lie at residues 10–31 and 47–63; these read CPVC…CGAC and CEKK…CRAC. Residues 130–319 form the NR LBD domain; that stretch reads EAEKDVSKIL…SMKKSRYLQF (190 aa).

The protein belongs to the nuclear hormone receptor family.

The protein localises to the nucleus. In terms of biological role, orphan nuclear receptor. The chain is Nuclear hormone receptor family member nhr-174 (nhr-174) from Caenorhabditis elegans.